Here is a 504-residue protein sequence, read N- to C-terminus: ATP synthase subunit alpha (504 aa).

169–176 lines the ATP pocket; it reads GDRQTGKT.

Belongs to the ATPase alpha/beta chains family. F-type ATPases have 2 components, CF(1) - the catalytic core - and CF(0) - the membrane proton channel. CF(1) has five subunits: alpha(3), beta(3), gamma(1), delta(1), epsilon(1). CF(0) has three main subunits: a(1), b(2) and c(9-12). The alpha and beta chains form an alternating ring which encloses part of the gamma chain. CF(1) is attached to CF(0) by a central stalk formed by the gamma and epsilon chains, while a peripheral stalk is formed by the delta and b chains.

Its subcellular location is the cell membrane. It carries out the reaction ATP + H2O + 4 H(+)(in) = ADP + phosphate + 5 H(+)(out). Its function is as follows. Produces ATP from ADP in the presence of a proton gradient across the membrane. The alpha chain is a regulatory subunit. This is ATP synthase subunit alpha from Clostridium botulinum (strain Alaska E43 / Type E3).